The primary structure comprises 242 residues: Mitochondrial inner membrane protease ATP23 (242 aa).

His142 lines the a divalent metal cation pocket. Residue Glu143 is part of the active site. His146 serves as a coordination point for a divalent metal cation.

This sequence belongs to the peptidase M76 family.

The protein localises to the mitochondrion inner membrane. Its function is as follows. Has a dual role in the assembly of mitochondrial ATPase. Acts as a protease that removes N-terminal residues of mitochondrial ATPase CF(0) subunit 6 at the intermembrane space side. Also involved in the correct assembly of the membrane-embedded ATPase CF(0) particle, probably mediating association of subunit 6 with the subunit 9 ring. This chain is Mitochondrial inner membrane protease ATP23 (ATP23), found in Meyerozyma guilliermondii (strain ATCC 6260 / CBS 566 / DSM 6381 / JCM 1539 / NBRC 10279 / NRRL Y-324) (Yeast).